Reading from the N-terminus, the 218-residue chain is uncharacterized protein (218 aa).

Transmembrane regions (helical) follow at residues 19 to 39, 92 to 112, 124 to 144, 161 to 181, and 196 to 216; these read VFGFSEFSIIGFITAVIFTII, FDYALFLTLVGIANIGIVSAV, YGLIAMIATLPLFGSAGMILA, LLFEKIIFAAGMAGETGIAPF, and YILMIHLSSLLLIVRTVEILL.

It is found in the cell membrane. This is an uncharacterized protein from Methanocaldococcus jannaschii (strain ATCC 43067 / DSM 2661 / JAL-1 / JCM 10045 / NBRC 100440) (Methanococcus jannaschii).